The chain runs to 263 residues: Undecaprenyl-diphosphatase 2 (263 aa).

A run of 8 helical transmembrane segments spans residues G15–F37, A42–W62, S79–F99, L107–A127, I142–F162, A183–I203, L216–L236, and V242–I262.

It belongs to the UppP family.

It localises to the cell membrane. The catalysed reaction is di-trans,octa-cis-undecaprenyl diphosphate + H2O = di-trans,octa-cis-undecaprenyl phosphate + phosphate + H(+). Functionally, catalyzes the dephosphorylation of undecaprenyl diphosphate (UPP). Confers resistance to bacitracin. This Bacillus cereus (strain ATCC 14579 / DSM 31 / CCUG 7414 / JCM 2152 / NBRC 15305 / NCIMB 9373 / NCTC 2599 / NRRL B-3711) protein is Undecaprenyl-diphosphatase 2.